The primary structure comprises 710 residues: Prolyl endopeptidase (710 aa).

N-acetylmethionine is present on M1. Position 157 is an N6-acetyllysine (K157). Catalysis depends on charge relay system residues S554, D641, and H680.

This sequence belongs to the peptidase S9A family. In terms of assembly, monomer. The N-terminus is blocked.

It is found in the cytoplasm. The enzyme catalyses Hydrolysis of Pro-|-Xaa &gt;&gt; Ala-|-Xaa in oligopeptides.. Its function is as follows. Cleaves peptide bonds on the C-terminal side of prolyl residues within peptides that are up to approximately 30 amino acids long. This chain is Prolyl endopeptidase (PREP), found in Homo sapiens (Human).